Consider the following 133-residue polypeptide: Small ribosomal subunit protein uS8 (133 aa).

It belongs to the universal ribosomal protein uS8 family. In terms of assembly, part of the 30S ribosomal subunit.

In terms of biological role, one of the primary rRNA binding proteins, it binds directly to 16S rRNA central domain where it helps coordinate assembly of the platform of the 30S subunit. This chain is Small ribosomal subunit protein uS8, found in Saccharolobus islandicus (strain L.S.2.15 / Lassen #1) (Sulfolobus islandicus).